A 528-amino-acid chain; its full sequence is Cytochrome P450 monooxygenase vrcB (528 aa).

The chain crosses the membrane as a helical span at residues Tyr-5–His-27. Residue Cys-470 participates in heme binding.

The protein belongs to the cytochrome P450 family. It depends on heme as a cofactor.

The protein resides in the membrane. It carries out the reaction variecoladiene + 4 reduced [NADPH--hemoprotein reductase] + 4 O2 = variecolin + 4 oxidized [NADPH--hemoprotein reductase] + 6 H2O + 4 H(+). It participates in secondary metabolite biosynthesis; terpenoid biosynthesis. In terms of biological role, cytochrome P450 monooxygenase; part of the gene cluster that mediates the biosynthesis of the sesterterpene variecolin. The first step in the pathway is performed by the variecoladiene synthase vrcA that possesses both prenyl transferase and terpene cyclase activity, converting isopentenyl diphosphate and dimethylallyl diphosphate into geranylfarnesyl pyrophosphate (GFPP) and then converting GFPP into the tetracyclic variecoladiene. The cytochrome P450 monooxygenase vrcB then catalyzes multiple oxidations at C-5 and C-20 positions to yield variecolin. In Aspergillus aculeatus (strain ATCC 16872 / CBS 172.66 / WB 5094), this protein is Cytochrome P450 monooxygenase vrcB.